Here is a 248-residue protein sequence, read N- to C-terminus: Probable transcriptional regulatory protein FTF0655 (248 aa).

The protein belongs to the TACO1 family.

Its subcellular location is the cytoplasm. This chain is Probable transcriptional regulatory protein FTF0655, found in Francisella tularensis subsp. tularensis (strain FSC 198).